A 777-amino-acid chain; its full sequence is Nuclear autoantigenic sperm protein (777 aa).

A2 bears the N-acetylalanine mark. K34 bears the N6-acetyllysine mark. Residues 44 to 77 (AKKLLGLGQKHLVMGDIPAAVNAFQEAASLLGKK) form a TPR 1 repeat. The tract at residues 117–128 (EEEEGEKTEEES) is histone-binding. The residue at position 124 (T124) is a Phosphothreonine. Residue S128 is modified to Phosphoserine. Composition is skewed to basic and acidic residues over residues 152–186 (MGEK…REDM), 227–259 (VTSK…EKGG), and 267–276 (IEEKPKEASK). The tract at residues 152–496 (MGEKEAQKTE…ALENKSLQEN (345 aa)) is disordered. Residues 211 to 244 (EEGKGAAAPEGLSEAEVTSKKPDQEIPGAEEGKS) are histone-binding. K243 carries the N6-acetyllysine modification. Position 244 is a phosphoserine (S244). K285 is subject to N6-acetyllysine. A compositionally biased stretch (basic and acidic residues) spans 303 to 319 (DEPKEQVAASESERGKA). A Phosphoserine modification is found at S312. The span at 342–353 (AADASAAEAGSE) shows a compositional bias: low complexity. Phosphoserine occurs at positions 399, 411, and 440. A histone-binding region spans residues 458–501 (EQMKEGEETEGSEEEDKENDKAEETLNDSALENKSLQENEEEEI). The span at 464–474 (EETEGSEEEDK) shows a compositional bias: acidic residues. At T466 the chain carries Phosphothreonine. Phosphoserine is present on residues S469, S486, and S492. Polar residues predominate over residues 484-493 (NDSALENKSL). TPR repeat units follow at residues 531–564 (AQAH…QEQY) and 573–606 (AETH…IEKR). Residues 593-648 (VAQFSKSIEVIEKRMAVLNEQMKEAEGSPTEYEKEIEELKELLPEIREKIEDAKES) are a coiled coil. S651 carries the post-translational modification Phosphoserine. Residues 667-681 (STSGFTPSGGSSSVS) show a composition bias toward low complexity. The tract at residues 667-777 (STSGFTPSGG…AGATVESTAC (111 aa)) is disordered. Phosphothreonine is present on T672. Residues S694 and S695 each carry the phosphoserine modification. Residues 705–711 (VRKKRKP) carry the Nuclear localization signal motif. The segment covering 710-728 (KPEEESPRKDDAKKAKQEP) has biased composition (basic and acidic residues). The residue at position 715 (S715) is a Phosphoserine. K725 is covalently cross-linked (Glycyl lysine isopeptide (Lys-Gly) (interchain with G-Cter in SUMO1)). At S734 the chain carries Phosphoserine.

Belongs to the NASP family. Binds to linker H1 histones. Interacts with histones H2A, H2B, H3 and H4. Interacts with histone H3.3. Interacts with histones H3 and H4; NASP is a histone chaperone that stabilizes and maintains a soluble pool of histone H3-H4 dimers. Interacts with ASF1A and ASF1B; the interaction is probably indirect and mediated by H3-H4. Also binds to HSP90 in the cytoplasm. This interaction stimulates binding of NASP to H1-6/H1T.

It localises to the cytoplasm. Its subcellular location is the nucleus. Its function is as follows. Component of the histone chaperone network. Binds and stabilizes histone H3-H4 not bound to chromatin to maintain a soluble reservoir and modulate degradation by chaperone-mediated autophagy. Required for DNA replication, normal cell cycle progression and cell proliferation. Forms a cytoplasmic complex with HSP90 and H1 linker histones and stimulates HSP90 ATPase activity. NASP and H1 histone are subsequently released from the complex and translocate to the nucleus where the histone is released for binding to DNA. The polypeptide is Nuclear autoantigenic sperm protein (Bos taurus (Bovine)).